Consider the following 89-residue polypeptide: Small ribosomal subunit protein uS15 (89 aa).

Belongs to the universal ribosomal protein uS15 family. As to quaternary structure, part of the 30S ribosomal subunit. Forms a bridge to the 50S subunit in the 70S ribosome, contacting the 23S rRNA.

Functionally, one of the primary rRNA binding proteins, it binds directly to 16S rRNA where it helps nucleate assembly of the platform of the 30S subunit by binding and bridging several RNA helices of the 16S rRNA. Forms an intersubunit bridge (bridge B4) with the 23S rRNA of the 50S subunit in the ribosome. The chain is Small ribosomal subunit protein uS15 from Rhodospirillum centenum (strain ATCC 51521 / SW).